The sequence spans 310 residues: MNTQARLTSTQWKARFKGYVQVTKPGIIFGNLISVAGGFLLAAKGDVDLVLMLASLVGLSLVVASGCAINNCIDRDIDAKMQRTCKRVTVTGEIPLSHVLLFGIAIGVLGFGILALFTNALALLFAAIGYVVYVGIYSLYMKRNSVYGTLVGSFSGAVPPVVGYCSVTGQMDMGAVILLLMFSLWQMPHSYAIAIFRFNDYAAAKIPVLPVAEGMAKAKHHIVLYIAVFALVSTMLPLAGYTGTAFMAVTCATSLWWLTMALKGYRQDVDMPRWARQVFGFSIITITALSVTMALDFQAVSQTPLFTLVR.

9 consecutive transmembrane segments (helical) span residues 25–45 (PGII…AAKG), 49–69 (LVLM…GCAI), 98–118 (HVLL…ALFT), 121–141 (LALL…SLYM), 145–165 (SVYG…VGYC), 176–196 (VILL…IAIF), 222–242 (IVLY…AGYT), 245–265 (AFMA…LKGY), and 277–297 (QVFG…ALDF).

This sequence belongs to the UbiA prenyltransferase family. Protoheme IX farnesyltransferase subfamily.

Its subcellular location is the cell inner membrane. It catalyses the reaction heme b + (2E,6E)-farnesyl diphosphate + H2O = Fe(II)-heme o + diphosphate. The protein operates within porphyrin-containing compound metabolism; heme O biosynthesis; heme O from protoheme: step 1/1. Converts heme B (protoheme IX) to heme O by substitution of the vinyl group on carbon 2 of heme B porphyrin ring with a hydroxyethyl farnesyl side group. The sequence is that of Protoheme IX farnesyltransferase 2 from Shewanella sp. (strain MR-7).